Reading from the N-terminus, the 161-residue chain is Lipoprotein signal peptidase (161 aa).

The next 3 membrane-spanning stretches (helical) occupy residues leucine 4–tyrosine 24, lysine 61–isoleucine 81, and serine 87–aspartate 107. Active-site residues include aspartate 116 and aspartate 132. Residues isoleucine 127–isoleucine 147 traverse the membrane as a helical segment.

It belongs to the peptidase A8 family.

The protein resides in the cell membrane. The catalysed reaction is Release of signal peptides from bacterial membrane prolipoproteins. Hydrolyzes -Xaa-Yaa-Zaa-|-(S,diacylglyceryl)Cys-, in which Xaa is hydrophobic (preferably Leu), and Yaa (Ala or Ser) and Zaa (Gly or Ala) have small, neutral side chains.. It participates in protein modification; lipoprotein biosynthesis (signal peptide cleavage). This protein specifically catalyzes the removal of signal peptides from prolipoproteins. The sequence is that of Lipoprotein signal peptidase from Enterococcus faecalis (strain ATCC 700802 / V583).